Reading from the N-terminus, the 156-residue chain is Lipoprotein signal peptidase (156 aa).

2 helical membrane-spanning segments follow: residues Ile52 to Val72 and Phe85 to Phe105. Active-site residues include Asp111 and Asp129. Residues Asn121–Leu141 form a helical membrane-spanning segment.

It belongs to the peptidase A8 family.

The protein localises to the cell membrane. The enzyme catalyses Release of signal peptides from bacterial membrane prolipoproteins. Hydrolyzes -Xaa-Yaa-Zaa-|-(S,diacylglyceryl)Cys-, in which Xaa is hydrophobic (preferably Leu), and Yaa (Ala or Ser) and Zaa (Gly or Ala) have small, neutral side chains.. It participates in protein modification; lipoprotein biosynthesis (signal peptide cleavage). Its function is as follows. This protein specifically catalyzes the removal of signal peptides from prolipoproteins. The chain is Lipoprotein signal peptidase from Halalkalibacterium halodurans (strain ATCC BAA-125 / DSM 18197 / FERM 7344 / JCM 9153 / C-125) (Bacillus halodurans).